A 324-amino-acid polypeptide reads, in one-letter code: MSDRDLFAGLLAPRSFPGWVELLLPRIEARFQEGRHGDWPAWMQLLGELPKVVPTRLDFAQNAVRIEGDTDCDGATRRSIETALRRLHPWRKGPYDIHGIFIDAEWRSDLKWRRLEGAIAPLAGRRVLDVGCGNGYHAWRMLGAGAKSVIGIDPTLLSVVQFLAVRHFAGDWPVAVLPLGIEDFPAETRAFDTVFSMGVLYHRRSPFDHLVELKGCLRPGGELVLETLVVEGEAGRVLVPEGRYAQMRNVWFVPSPPTLSSWLTRAGFRQARLIDVSPTTTQEQRSTGWMRFQSLADFLDPEDPSRTIEGHPAPRRAIFLAEAP.

Carboxy-S-adenosyl-L-methionine contacts are provided by residues Lys-92, Trp-106, Lys-111, Gly-131, 153-155 (DPT), 181-182 (IE), Met-197, Tyr-201, and Arg-316.

The protein belongs to the class I-like SAM-binding methyltransferase superfamily. CmoB family. In terms of assembly, homotetramer.

It catalyses the reaction carboxy-S-adenosyl-L-methionine + 5-hydroxyuridine(34) in tRNA = 5-carboxymethoxyuridine(34) in tRNA + S-adenosyl-L-homocysteine + H(+). Its function is as follows. Catalyzes carboxymethyl transfer from carboxy-S-adenosyl-L-methionine (Cx-SAM) to 5-hydroxyuridine (ho5U) to form 5-carboxymethoxyuridine (cmo5U) at position 34 in tRNAs. The polypeptide is tRNA U34 carboxymethyltransferase (Methylococcus capsulatus (strain ATCC 33009 / NCIMB 11132 / Bath)).